The primary structure comprises 223 residues: Cytidylate kinase (223 aa).

Residue 10 to 18 (GPAGTGKSS) participates in ATP binding.

Belongs to the cytidylate kinase family. Type 1 subfamily.

It is found in the cytoplasm. The catalysed reaction is CMP + ATP = CDP + ADP. It catalyses the reaction dCMP + ATP = dCDP + ADP. This Mycobacterium leprae (strain Br4923) protein is Cytidylate kinase.